Consider the following 222-residue polypeptide: Millepora cytotoxin-1 (222 aa).

Residues 1–20 (MVTLYLHVPILLLVVITARA) form the signal peptide. Positions 21–75 (APKPDTHNPFDELSSVAEKQDLHYGDRSRKDPFIAQNDVGNNFRDGTQENLTKVR) are excised as a propeptide. 3 cysteine pairs are disulfide-bonded: cysteine 89-cysteine 115, cysteine 142-cysteine 168, and cysteine 179-cysteine 222. 3 repeats span residues 100-109 (SIHDNHYEDR), 153-162 (SIHDNYYEDR), and 206-215 (SQHNNYYEDR).

This sequence belongs to the dermatopontin family. In terms of processing, is not glycosylated.

It is found in the secreted. Its subcellular location is the nematocyst. Its function is as follows. Is potently cytotoxic (EC(50) value 79 ng/mL) towards L1210 mouse leukemia cells, has hemagglutination activity on sheep erythrocytes, and is lethal in crayfish. Has no phospholipase A2 activity. The protein is Millepora cytotoxin-1 of Millepora dichotoma (Net fire coral).